Consider the following 957-residue polypeptide: Leucine--tRNA ligase (957 aa).

The short motif at 66–77 (PYPSGAGLHVGH) is the 'HIGH' region element. The 'KMSKS' region signature appears at 728–732 (KMGKS). K731 contacts ATP.

It belongs to the class-I aminoacyl-tRNA synthetase family.

It localises to the cytoplasm. It catalyses the reaction tRNA(Leu) + L-leucine + ATP = L-leucyl-tRNA(Leu) + AMP + diphosphate. The sequence is that of Leucine--tRNA ligase from Streptomyces griseus subsp. griseus (strain JCM 4626 / CBS 651.72 / NBRC 13350 / KCC S-0626 / ISP 5235).